A 311-amino-acid polypeptide reads, in one-letter code: Malate dehydrogenase (311 aa).

NAD(+) is bound by residues 7–13 (GAAGGIG) and Asp-34. Substrate is bound by residues Arg-81 and Arg-87. NAD(+)-binding positions include Asn-94 and 117–119 (ITN). Residues Asn-119 and Arg-153 each contribute to the substrate site. His-177 functions as the Proton acceptor in the catalytic mechanism. Met-227 serves as a coordination point for NAD(+).

The protein belongs to the LDH/MDH superfamily. MDH type 1 family. Homodimer.

The enzyme catalyses (S)-malate + NAD(+) = oxaloacetate + NADH + H(+). Catalyzes the reversible oxidation of malate to oxaloacetate. This is Malate dehydrogenase from Haemophilus influenzae (strain PittGG).